Consider the following 63-residue polypeptide: Large ribosomal subunit protein uL29 (63 aa).

Belongs to the universal ribosomal protein uL29 family.

This Edwardsiella ictaluri (strain 93-146) protein is Large ribosomal subunit protein uL29.